The primary structure comprises 210 residues: Protein GET1 (210 aa).

The Lumenal portion of the chain corresponds to 1 to 4 (MASL). The chain crosses the membrane as a helical span at residues 5-24 (LIIVFLSHVVTYLINTIGAT). At 25-110 (TVDNLLWLLY…SFDLTVKSVR (86 aa)) the chain is on the cytoplasmic side. The stretch at 43 to 97 (RTAVEQRRLKGEVVQLKREMKSTSSQDEFAKWAKLRRRHDKAMEEYEAKNKALGK) forms a coiled coil. A helical transmembrane segment spans residues 111-131 (FFSTTGLKFFLQFWYSKTPMF). Over 132-155 (ELPRGWVPWQVEWVLSFPRAPLGT) the chain is Lumenal. A helical transmembrane segment spans residues 156 to 172 (VSIQVWSGVCTTVVSLA). Residues 173–210 (GDALGVVIQSLILKMTKRGVARTSEGRPSQPMALKKEL) are Cytoplasmic-facing.

The protein belongs to the WRB/GET1 family. In terms of assembly, interacts with GET3.

Its subcellular location is the endoplasmic reticulum membrane. Required for the post-translational delivery of tail-anchored (TA) proteins to the endoplasmic reticulum. Acts as a membrane receptor for soluble GET3, which recognizes and selectively binds the transmembrane domain of TA proteins in the cytosol. The protein is Protein GET1 of Uncinocarpus reesii (strain UAMH 1704).